A 590-amino-acid chain; its full sequence is RNA-binding protein 47 (590 aa).

The segment covering 1 to 21 has biased composition (polar residues); the sequence is MTAEDSTTAMNSDPTVGSSTK. A disordered region spans residues 1 to 26; that stretch reads MTAEDSTTAMNSDPTVGSSTKVPEGV. RRM domains follow at residues 71-149, 151-233, and 246-318; these read CEVF…CSVD, CRLF…WAEP, and KILY…LAKP. Arginine 396 and arginine 407 each carry asymmetric dimethylarginine; alternate. Omega-N-methylarginine; alternate occurs at positions 396 and 407.

It belongs to the RRM RBM47 family. Homodimer. Interacts with A1CF. Interacts with APOBEC1; form an mRNA editing complex. Interacts with RBPMS.

The protein localises to the nucleus. The protein resides in the cytoplasm. Functionally, single-stranded RNA-binding protein that functions in a variety of RNA processes, including alternative splicing, RNA stabilization, and RNA editing. Functions as an enzyme-substrate adapter for the cytidine deaminase APOBEC1. With APOBEC1 forms an mRNA editing complex involved into cytidine to uridine editing of a variety of mRNA molecules. Through the binding of their 3'UTR, also stabilizes a variety of mRNAs and regulates the expression of genes such as the interferon alpha/beta receptor and interleukin-10. Also involved in the alternative splicing of several genes including TJP1. Binds the pre-mRNA (U)GCAUG consensus sequences in downstream intronic regions of alternative exons regulating their exclusion and inclusion into mRNAs. Independently of its RNA-binding activity, could negatively regulate MAVS by promoting its lysosomal degradation. The sequence is that of RNA-binding protein 47 from Rattus norvegicus (Rat).